The following is a 275-amino-acid chain: tRNA pseudouridine synthase A (275 aa).

D56 functions as the Nucleophile in the catalytic mechanism. Position 109 (Y109) interacts with substrate.

The protein belongs to the tRNA pseudouridine synthase TruA family.

The enzyme catalyses uridine(38/39/40) in tRNA = pseudouridine(38/39/40) in tRNA. Formation of pseudouridine at positions 38, 39 and 40 in the anticodon stem and loop of transfer RNAs. The protein is tRNA pseudouridine synthase A of Methanothermobacter thermautotrophicus (strain ATCC 29096 / DSM 1053 / JCM 10044 / NBRC 100330 / Delta H) (Methanobacterium thermoautotrophicum).